A 304-amino-acid polypeptide reads, in one-letter code: Glutaminase (304 aa).

Substrate is bound by residues S63, N114, E158, N165, Y189, Y240, and V258.

This sequence belongs to the glutaminase family. Homotetramer.

It catalyses the reaction L-glutamine + H2O = L-glutamate + NH4(+). The polypeptide is Glutaminase (Shewanella baltica (strain OS223)).